We begin with the raw amino-acid sequence, 147 residues long: MAGKKAPYGEFAGRKLKLKRKKFRWSDIRYKRRVLRLKEKSDPLEGAPQARGIVLEKIAVEAKQPNSAMRKAVRVQLIKNGKVVTAFTPGDGAINHIDEHDEVIIEGIGGPKGGSMGDIPGIRYKVVKVNRVSLKELVKGRKEKPRR.

This sequence belongs to the universal ribosomal protein uS12 family. In terms of assembly, part of the 30S ribosomal subunit.

Its function is as follows. With S4 and S5 plays an important role in translational accuracy. Located at the interface of the 30S and 50S subunits. This chain is Small ribosomal subunit protein uS12, found in Thermococcus kodakarensis (strain ATCC BAA-918 / JCM 12380 / KOD1) (Pyrococcus kodakaraensis (strain KOD1)).